The following is a 594-amino-acid chain: 3-hydroxy-3-methylglutaryl coenzyme A reductase 2-A (594 aa).

Positions 1-32 are disordered; that stretch reads MDVRRRPVKSLSSAKTATAGEPPKSQQQHPKA. At 1-37 the chain is on the lumenal side; sequence MDVRRRPVKSLSSAKTATAGEPPKSQQQHPKASDALP. The helical transmembrane segment at 38-58 threads the bilayer; sequence LPLYLTNGLFFTMFFSVMYFL. At 59–81 the chain is on the cytoplasmic side; sequence LHRWREKIRNSTPLHVVTLSELA. The chain crosses the membrane as a helical span at residues 82–102; it reads ALVLLMASVIYLLGFFGIGFV. Topologically, residues 103 to 549 are lumenal; the sequence is RSVIRPSPDA…SKESPGSNSR (447 aa). N-linked (GlcNAc...) asparagine glycosylation occurs at N261. The Charge relay system role is filled by E273. A glycan (N-linked (GlcNAc...) asparagine) is linked at N337. Catalysis depends on charge relay system residues K405 and D481. The chain crosses the membrane as a helical span at residues 550–570; sequence LLASIVAGSVLAGELSLMSAL. Topologically, residues 571-594 are cytoplasmic; sequence AAGQLVKSHMKYNRSSKDITKLSS. H579 (proton donor) is an active-site residue.

The protein belongs to the HMG-CoA reductase family. Mostly expressed in the petioles of seedlings, seedlings and roots, and, to a lower extent, in seeds, leaves, stems and flowers.

Its subcellular location is the endoplasmic reticulum membrane. It is found in the plastid. It localises to the chloroplast membrane. The protein localises to the peroxisome membrane. It carries out the reaction (R)-mevalonate + 2 NADP(+) + CoA = (3S)-3-hydroxy-3-methylglutaryl-CoA + 2 NADPH + 2 H(+). It functions in the pathway metabolic intermediate biosynthesis; (R)-mevalonate biosynthesis; (R)-mevalonate from acetyl-CoA: step 3/3. Competitive inhibition by mevinolin (Mev) is leading to a significant reduction of total ginsenoside in adventitious roots. Triggered by darkness. Catalyzes the synthesis of mevalonate, the specific precursor of all isoprenoid compounds present in plants. Component of the triterpene saponins (e.g. ginsenosides or panaxosides) and phytosterols biosynthetic pathways. This is 3-hydroxy-3-methylglutaryl coenzyme A reductase 2-A from Panax ginseng (Korean ginseng).